Consider the following 185-residue polypeptide: Translocon-associated protein subunit gamma (185 aa).

Met-1 bears the N-acetylmethionine mark. Residues 1-27 (MAPKGSCKQQSEEDLLLQDFSRNLSAK) lie on the Lumenal side of the membrane. At Ser-11 the chain carries Phosphoserine. A helical membrane pass occupies residues 28 to 48 (SSALFFGNAFIVSAIPIWLYW). At 49–54 (RIWHMD) the chain is on the cytoplasmic side. Residues 55–76 (LIQSAVLYSVMTLVSTYLVAFA) traverse the membrane as a helical segment. At 77–135 (YKNVKFVLKHKVAQKREDAVSKEVTRKLSEADNRKMSRKEKDERILWKKNEVADYEATT) the chain is on the lumenal side. Phosphoserine is present on Ser-105. A helical membrane pass occupies residues 136-157 (FSIFYNNTLFLVVVIVASFFIL). The Cytoplasmic segment spans residues 158–163 (KNFNPT). A helical transmembrane segment spans residues 164-184 (VNYILSISASSGLIALLSTGS).

This sequence belongs to the TRAP-gamma family. As to quaternary structure, heterotetramer of TRAP-alpha, TRAP-beta, TRAP-delta and TRAP-gamma.

The protein localises to the endoplasmic reticulum membrane. Its function is as follows. TRAP proteins are part of a complex whose function is to bind calcium to the ER membrane and thereby regulate the retention of ER resident proteins. The sequence is that of Translocon-associated protein subunit gamma (SSR3) from Pongo abelii (Sumatran orangutan).